The sequence spans 298 residues: N-acetylmuramic acid 6-phosphate etherase (298 aa).

Positions 55-218 (IHAQVSGGGR…STGLMIKSGK (164 aa)) constitute an SIS domain. Glu83 functions as the Proton donor in the catalytic mechanism. Glu114 is a catalytic residue.

The protein belongs to the GCKR-like family. MurNAc-6-P etherase subfamily. As to quaternary structure, homodimer.

It carries out the reaction N-acetyl-D-muramate 6-phosphate + H2O = N-acetyl-D-glucosamine 6-phosphate + (R)-lactate. It participates in amino-sugar metabolism; 1,6-anhydro-N-acetylmuramate degradation. It functions in the pathway amino-sugar metabolism; N-acetylmuramate degradation. Its pathway is cell wall biogenesis; peptidoglycan recycling. Specifically catalyzes the cleavage of the D-lactyl ether substituent of MurNAc 6-phosphate, producing GlcNAc 6-phosphate and D-lactate. Together with AnmK, is also required for the utilization of anhydro-N-acetylmuramic acid (anhMurNAc) either imported from the medium or derived from its own cell wall murein, and thus plays a role in cell wall recycling. The polypeptide is N-acetylmuramic acid 6-phosphate etherase (Escherichia coli O7:K1 (strain IAI39 / ExPEC)).